Here is a 350-residue protein sequence, read N- to C-terminus: Alcohol dehydrogenase 1 (350 aa).

Positions 46, 69, 100, 103, 106, 114, and 156 each coordinate Zn(2+). NAD(+)-binding positions include 180–186, Asp204, Lys209, 271–273, and Arg343; these read GAGGGLG and VGL.

This sequence belongs to the zinc-containing alcohol dehydrogenase family. In terms of assembly, homotetramer. It depends on Zn(2+) as a cofactor.

It is found in the cytoplasm. It carries out the reaction a primary alcohol + NAD(+) = an aldehyde + NADH + H(+). The enzyme catalyses a secondary alcohol + NAD(+) = a ketone + NADH + H(+). The polypeptide is Alcohol dehydrogenase 1 (ADH1) (Candida albicans (Yeast)).